Consider the following 329-residue polypeptide: Mitochondrial substrate carrier family protein Q (329 aa).

3 Solcar repeats span residues valine 18–isoleucine 115, leucine 125–leucine 206, and leucine 216–histidine 310. A run of 6 helical transmembrane segments spans residues leucine 21 to phenylalanine 41, leucine 95 to isoleucine 115, leucine 131 to valine 151, glycine 175 to valine 195, valine 221 to leucine 241, and alanine 298 to leucine 318.

Belongs to the mitochondrial carrier (TC 2.A.29) family.

Its subcellular location is the peroxisome membrane. Its function is as follows. May have transport activity. In Dictyostelium discoideum (Social amoeba), this protein is Mitochondrial substrate carrier family protein Q (mcfQ).